A 414-amino-acid chain; its full sequence is Histidine--tRNA ligase (414 aa).

Belongs to the class-II aminoacyl-tRNA synthetase family. Homodimer.

The protein localises to the cytoplasm. The enzyme catalyses tRNA(His) + L-histidine + ATP = L-histidyl-tRNA(His) + AMP + diphosphate + H(+). In Pelobacter propionicus (strain DSM 2379 / NBRC 103807 / OttBd1), this protein is Histidine--tRNA ligase.